Consider the following 392-residue polypeptide: Phosphoglycerate kinase (392 aa).

Substrate is bound by residues 21–23 (DLN), Arg-36, 59–62 (HLGR), Arg-114, and Arg-147. Residues Lys-198, Glu-320, and 346–349 (GGDT) contribute to the ATP site.

It belongs to the phosphoglycerate kinase family. Monomer.

It is found in the cytoplasm. The enzyme catalyses (2R)-3-phosphoglycerate + ATP = (2R)-3-phospho-glyceroyl phosphate + ADP. Its pathway is carbohydrate degradation; glycolysis; pyruvate from D-glyceraldehyde 3-phosphate: step 2/5. The protein is Phosphoglycerate kinase of Nitrosomonas europaea (strain ATCC 19718 / CIP 103999 / KCTC 2705 / NBRC 14298).